The primary structure comprises 1415 residues: DNA-directed RNA polymerase subunit beta' (1415 aa).

Cysteine 71, cysteine 73, cysteine 86, and cysteine 89 together coordinate Zn(2+). 3 residues coordinate Mg(2+): aspartate 461, aspartate 463, and aspartate 465. The Zn(2+) site is built by cysteine 815, cysteine 889, cysteine 896, and cysteine 899.

It belongs to the RNA polymerase beta' chain family. The RNAP catalytic core consists of 2 alpha, 1 beta, 1 beta' and 1 omega subunit. When a sigma factor is associated with the core the holoenzyme is formed, which can initiate transcription. The cofactor is Mg(2+). Requires Zn(2+) as cofactor.

The enzyme catalyses RNA(n) + a ribonucleoside 5'-triphosphate = RNA(n+1) + diphosphate. Functionally, DNA-dependent RNA polymerase catalyzes the transcription of DNA into RNA using the four ribonucleoside triphosphates as substrates. The sequence is that of DNA-directed RNA polymerase subunit beta' from Haemophilus influenzae (strain ATCC 51907 / DSM 11121 / KW20 / Rd).